The sequence spans 253 residues: Probable transcriptional regulatory protein RBE_0568 (253 aa).

Residues 1-21 (MAGHSKFKNIQHRKGAQDKKR) are disordered.

This sequence belongs to the TACO1 family.

Its subcellular location is the cytoplasm. The chain is Probable transcriptional regulatory protein RBE_0568 from Rickettsia bellii (strain RML369-C).